A 281-amino-acid chain; its full sequence is Merozoite surface protein 1 (281 aa).

The N-terminal stretch at 1–19 is a signal peptide; sequence MKIIFFLCSFLFFIINTQC. A compositionally biased stretch (low complexity) spans 63 to 100; it reads ASAQSGASAQSGASAQSGASAQSGTSGPSGPSGTSPSS. The disordered stretch occupies residues 63-126; it reads ASAQSGASAQ…PADASDSDAK (64 aa). Over residues 101-110 the composition is skewed to polar residues; that stretch reads RSNTLPRSNT. Asn109 carries N-linked (GlcNAc...) asparagine glycosylation. Over residues 111–120 the composition is skewed to low complexity; it reads SSGASPPADA. Residue Asn248 is glycosylated (N-linked (GlcNAc...) asparagine).

In terms of assembly, forms a complex composed of subunits p83, p30, p38, and p42 which remain non-covalently associated; the complex is formed at the merozoite surface prior to egress from host erythrocytes. Forms a complex composed of processed MSP1 subunits, MSP6 subunit p36 and MSP7; the complex is formed at the merozoite surface prior to egress from host erythrocytes. Within the complex, interacts (via subunit p38) with MSP6 subunit p36 and (via subunits p83, p30 and p38) with MSP7 (via subunit p22). Forms a complex composed of MSP1, MSP6, DBLMSP1 and DBLMSP2. Within the complex, interacts (via subunit p38) with DBLMSP1 and DBLMSP2. Forms a complex composed of MSP1, and rhoptry proteins RhopH3, RAP1 and CLAG9/RhopH3. Within the complex, interacts (via subunits p42 and p19) with RhopH3 (via C-terminus). Forms a complex composed of MSP1, MSP6, MSP7, MSP9 and MSP3; within the complex, MSP6 and MSP9 mediate the binding to the host erythrocyte. Interacts (via subunits p19 and p42) with MSP9; the interaction is direct; MSP1 subunits p19 or p42, and MSP9 form a co-ligand complex that interacts with host SLC4A1/Band 3 protein. May interact with PFD6. Interacts with host spectrin. In terms of processing, the p190 precursor is cleaved by SUB1 prior to merozoite egress into 4 subunits p83, p30, p38, and p42 which remain non-covalently associated. SUB1-mediated proteolytic cleavage occurs in an orderly manner; the first cleavage occurs at the p30/p38 site, followed by cleavage at the p83/p30 site, the last cleavage occurs at the p38/p42 site. The order of cleavage is essential for parasite viability. SUB1-mediated processing is essential for merozoite egress. In a second processing step during erythrocyte invasion, p42 is cleaved by SUB2 into p33 and p19; the latter remains attached to the merozoite surface via its GPI-anchor and is endocytosed during the subsequent ring stage.

It localises to the cell membrane. It is found in the secreted. During the asexual blood stage, involved in merozoite egress from host erythrocytes possibly via its interaction with the host cytoskeleton protein spectrin resulting in the destabilization of the host cytoskeleton and thus leading to erythrocyte cell membrane rupture. Involved in the binding to host erythrocytes and is required for host erythrocyte invasion. This Plasmodium falciparum (isolate NF7 / Ghana) protein is Merozoite surface protein 1.